Consider the following 179-residue polypeptide: Stathmin-2 (179 aa).

Positions 1–26 are membrane attachment; that stretch reads MAKTAMAYKEKMKELSMLSLICSCFY. Residue Ser16 is modified to Phosphoserine. S-palmitoyl cysteine attachment occurs at residues Cys22 and Cys24. The 142-residue stretch at 38–179 folds into the SLD domain; sequence DDMEVKQINK…NKELQVELSG (142 aa). A regulatory/phosphorylation domain region spans residues 39–96; that stretch reads DMEVKQINKRASGQAFELILKPPSPISEAPRTLASPKKKDLSLEEIQKKLEAAEGRRK. Ser50 bears the Phosphoserine mark. Phosphoserine; by MAPK8 is present on residues Ser62 and Ser73. A coiled-coil region spans residues 75 to 179; the sequence is KKKDLSLEEI…NKELQVELSG (105 aa). Phosphoserine occurs at positions 80 and 97.

The protein belongs to the stathmin family. Interacts with ITM2C. Interacts with MAPK8. Interacts with KIFBP. Interacts (via the N-terminal region) with CIB1 (via C-terminal region); the interaction is direct, occurs in a calcium-dependent manner and attenuates the neurite outgrowth inhibition of STMN2. Sumoylated. In terms of processing, phosphorylated by MAPK9 and MAPK10 in the developing brain cortex. Phosphorylated mostly by MAPK8. Post-translationally, N-terminal palmitoylation promotes specific anchoring to the cytosolic leaflet of Golgi membranes and subsequent vesicular trafficking along dendrites and axons. Neuronal Stathmins are substrates for palmitoyltransferases ZDHHC3, ZDHHC7 and ZDHHC15. As to expression, expressed in neurons (at protein level). Present in growth cones and abundant in developing neurons.

Its subcellular location is the cytoplasm. It is found in the perinuclear region. The protein resides in the cell projection. The protein localises to the growth cone. It localises to the axon. Its subcellular location is the membrane. It is found in the golgi apparatus. The protein resides in the endosome. The protein localises to the lamellipodium. Regulator of microtubule stability. When phosphorylated by MAPK8, stabilizes microtubules and consequently controls neurite length in cortical neurons. In the developing brain, negatively regulates the rate of exit from multipolar stage and retards radial migration from the ventricular zone. The sequence is that of Stathmin-2 (Stmn2) from Rattus norvegicus (Rat).